A 117-amino-acid polypeptide reads, in one-letter code: Large ribosomal subunit protein bL20 (117 aa).

The protein belongs to the bacterial ribosomal protein bL20 family.

Binds directly to 23S ribosomal RNA and is necessary for the in vitro assembly process of the 50S ribosomal subunit. It is not involved in the protein synthesizing functions of that subunit. In Natranaerobius thermophilus (strain ATCC BAA-1301 / DSM 18059 / JW/NM-WN-LF), this protein is Large ribosomal subunit protein bL20.